We begin with the raw amino-acid sequence, 82 residues long: DNA-directed RNA polymerase subunit omega (82 aa).

It belongs to the RNA polymerase subunit omega family. As to quaternary structure, the RNAP catalytic core consists of 2 alpha, 1 beta, 1 beta' and 1 omega subunit. When a sigma factor is associated with the core the holoenzyme is formed, which can initiate transcription.

The enzyme catalyses RNA(n) + a ribonucleoside 5'-triphosphate = RNA(n+1) + diphosphate. Its function is as follows. Promotes RNA polymerase assembly. Latches the N- and C-terminal regions of the beta' subunit thereby facilitating its interaction with the beta and alpha subunits. This is DNA-directed RNA polymerase subunit omega from Lachnoclostridium phytofermentans (strain ATCC 700394 / DSM 18823 / ISDg) (Clostridium phytofermentans).